A 255-amino-acid chain; its full sequence is tRNA (guanine-N(1)-)-methyltransferase (255 aa).

S-adenosyl-L-methionine-binding positions include G114 and 134-139 (IGDYIL).

It belongs to the RNA methyltransferase TrmD family. Homodimer.

The protein resides in the cytoplasm. It carries out the reaction guanosine(37) in tRNA + S-adenosyl-L-methionine = N(1)-methylguanosine(37) in tRNA + S-adenosyl-L-homocysteine + H(+). Specifically methylates guanosine-37 in various tRNAs. This is tRNA (guanine-N(1)-)-methyltransferase from Blochmanniella pennsylvanica (strain BPEN).